The chain runs to 113 residues: Vitelline membrane protein Vm32E (113 aa).

The signal sequence occupies residues 1–17; that stretch reads MKIVAFTLVAFVALAGA. One can recognise a VM domain in the interval 33–70; that stretch reads GYPAPPCPTNYLFSCQPNLAPVPCAQQAPAYGSAGAYT.

The protein belongs to the vitelline membrane family.

It is found in the secreted. Major early eggshell protein. This Drosophila erecta (Fruit fly) protein is Vitelline membrane protein Vm32E.